The chain runs to 469 residues: Cysteine protease ATG4D (469 aa).

Positions 1 to 29 (MNSVSPLATQYGSPKGSQQMENRSTQSGG) are enriched in polar residues. The segment at 1–41 (MNSVSPLATQYGSPKGSQQMENRSTQSGGHEQRKMGHQDAT) is disordered. C131 (nucleophile) is an active-site residue. A disordered region spans residues 169 to 191 (IRSSSPPSMPLSSLATGHSAGDY). Low complexity predominate over residues 171–182 (SSSPPSMPLSSL). Residues D356 and H358 contribute to the active site. Residues 436–469 (QEYAEGPQSSSHPPVCRKKGPLVKRPSSDEFEFL) are disordered.

Belongs to the peptidase C54 family.

It is found in the cytoplasm. It catalyses the reaction [protein]-C-terminal L-amino acid-glycyl-phosphatidylethanolamide + H2O = [protein]-C-terminal L-amino acid-glycine + a 1,2-diacyl-sn-glycero-3-phosphoethanolamine. It carries out the reaction [protein]-C-terminal L-amino acid-glycyl-phosphatidylserine + H2O = [protein]-C-terminal L-amino acid-glycine + a 1,2-diacyl-sn-glycero-3-phospho-L-serine. In terms of biological role, cysteine protease that plays a key role in autophagy by mediating both proteolytic activation and delipidation of ATG8 family proteins. The protease activity is required for proteolytic activation of ATG8 family proteins to reveal a C-terminal glycine. Exposure of the glycine at the C-terminus is essential for ATG8 proteins conjugation to phosphatidylethanolamine (PE) and insertion to membranes, which is necessary for autophagy. In addition to the protease activity, also mediates delipidation of ATG8 family proteins. Catalyzes delipidation of PE-conjugated forms of ATG8 proteins during macroautophagy. Also involved in non-canonical autophagy, a parallel pathway involving conjugation of ATG8 proteins to single membranes at endolysosomal compartments, by catalyzing delipidation of ATG8 proteins conjugated to phosphatidylserine (PS). This chain is Cysteine protease ATG4D, found in Xenopus laevis (African clawed frog).